Consider the following 351-residue polypeptide: Alcohol dehydrogenase 2 (351 aa).

Positions 47, 70, 101, 104, 107, 115, and 157 each coordinate Zn(2+). Residues 181-187, D205, K210, 272-274, and R344 contribute to the NAD(+) site; these read GAGGGLG and VGL.

The protein belongs to the zinc-containing alcohol dehydrogenase family. In terms of assembly, homotetramer. Requires Zn(2+) as cofactor.

It carries out the reaction a secondary alcohol + NAD(+) = a ketone + NADH + H(+). Its function is as follows. Versatile oxidoreductase that catalyzes the oxidation and reduction of a broad range of substrates. Preferentially oxidizes secondary alcohols. Has highest activity for racemic 2-octanol. Is also an efficient reductase for selected substrates. Substrate selectivity was found for medium chain lipophilic ketones. Has highest activities for 2-octanone, 2-nonanone and 2-decanone. The enzyme is (S)-selective in the reduction direction and produces exclusively the (S)-enantiomer. In Yarrowia lipolytica (strain CLIB 122 / E 150) (Yeast), this protein is Alcohol dehydrogenase 2 (ADH2).